Here is a 280-residue protein sequence, read N- to C-terminus: Tryptophan synthase alpha chain (280 aa).

Active-site proton acceptor residues include glutamate 50 and aspartate 61.

Belongs to the TrpA family. Tetramer of two alpha and two beta chains.

It catalyses the reaction (1S,2R)-1-C-(indol-3-yl)glycerol 3-phosphate + L-serine = D-glyceraldehyde 3-phosphate + L-tryptophan + H2O. The protein operates within amino-acid biosynthesis; L-tryptophan biosynthesis; L-tryptophan from chorismate: step 5/5. Its function is as follows. The alpha subunit is responsible for the aldol cleavage of indoleglycerol phosphate to indole and glyceraldehyde 3-phosphate. The sequence is that of Tryptophan synthase alpha chain from Methylorubrum extorquens (strain PA1) (Methylobacterium extorquens).